The sequence spans 590 residues: Zinc finger protein 703 (590 aa).

Residues 1-14 show a composition bias toward polar residues; sequence MSDSPAGSNPRTPE. 3 disordered regions span residues 1–43, 96–293, and 341–366; these read MSDS…DPLR, CSQI…AGHV, and LVGGQLSGGLGLPPGKPPSSSPLTGA. The residue at position 2 (serine 2) is an N-acetylserine. 4 stretches are compositionally biased toward low complexity: residues 27 to 37, 128 to 139, 171 to 189, and 207 to 219; these read PAVPAAVSLLP, RSAPGAASAAAA, GSSSVSSTSSSSSSSPGDK, and APVSASSSSSSPG. Residues 241–251 are compositionally biased toward basic and acidic residues; the sequence is ELDKKDQEPKP. Serine 252 is modified (phosphoserine). Gly residues-rich tracts occupy residues 260 to 273 and 341 to 352; these read RGGGGEPGAHGGAE and LVGGQLSGGLGL. The C2H2-type zinc finger occupies 456–484; sequence HSCNWVAASGPCDKRFATSEELLSHLRTH. The residue at position 580 (arginine 580) is an Omega-N-methylarginine.

Belongs to the Elbow/Noc family. As to quaternary structure, interacts with TLE4; increases transcriptional repression. Interacts with DCAF7 and PHB2. May interact with HSPD1. Expressed in mammary epithelium.

The protein resides in the nucleus. The protein localises to the cytoplasm. Functionally, transcriptional corepressor which does not bind directly to DNA and may regulate transcription through recruitment of histone deacetylases to gene promoters. Regulates cell adhesion, migration and proliferation. May be required for segmental gene expression during hindbrain development. In Homo sapiens (Human), this protein is Zinc finger protein 703 (ZNF703).